The sequence spans 81 residues: ATP synthase subunit c, chloroplastic (81 aa).

The next 2 membrane-spanning stretches (helical) occupy residues 3–23 (PLISAASVIAAGLAVGLASIG) and 57–77 (LAFMEALTIYGLVVALALLFA).

It belongs to the ATPase C chain family. F-type ATPases have 2 components, F(1) - the catalytic core - and F(0) - the membrane proton channel. F(1) has five subunits: alpha(3), beta(3), gamma(1), delta(1), epsilon(1). F(0) has four main subunits: a(1), b(1), b'(1) and c(10-14). The alpha and beta chains form an alternating ring which encloses part of the gamma chain. F(1) is attached to F(0) by a central stalk formed by the gamma and epsilon chains, while a peripheral stalk is formed by the delta, b and b' chains.

The protein localises to the plastid. The protein resides in the chloroplast thylakoid membrane. Its function is as follows. F(1)F(0) ATP synthase produces ATP from ADP in the presence of a proton or sodium gradient. F-type ATPases consist of two structural domains, F(1) containing the extramembraneous catalytic core and F(0) containing the membrane proton channel, linked together by a central stalk and a peripheral stalk. During catalysis, ATP synthesis in the catalytic domain of F(1) is coupled via a rotary mechanism of the central stalk subunits to proton translocation. Key component of the F(0) channel; it plays a direct role in translocation across the membrane. A homomeric c-ring of between 10-14 subunits forms the central stalk rotor element with the F(1) delta and epsilon subunits. The chain is ATP synthase subunit c, chloroplastic from Ipomoea purpurea (Common morning glory).